A 294-amino-acid chain; its full sequence is Eukaryotic translation initiation factor 3 subunit F (294 aa).

Residues 20–163 enclose the MPN domain; the sequence is VTVTAQALFQ…IDPSKNSGNC (144 aa).

It belongs to the eIF-3 subunit F family. As to quaternary structure, component of the eukaryotic translation initiation factor 3 (eIF-3) complex.

It localises to the cytoplasm. Its function is as follows. Component of the eukaryotic translation initiation factor 3 (eIF-3) complex, which is involved in protein synthesis of a specialized repertoire of mRNAs and, together with other initiation factors, stimulates binding of mRNA and methionyl-tRNAi to the 40S ribosome. The eIF-3 complex specifically targets and initiates translation of a subset of mRNAs involved in cell proliferation. In Yarrowia lipolytica (strain CLIB 122 / E 150) (Yeast), this protein is Eukaryotic translation initiation factor 3 subunit F.